The sequence spans 822 residues: Dextranase (822 aa).

A signal peptide spans 1–38 (MTVNLTLQHASEIIGQDNVDLTLAAGASAKVSNLTVAS). Disordered regions lie at residues 607–669 (EPVT…VDEL) and 683–788 (ETAH…ETTS). The segment covering 619–636 (NTVTSEASSETAKSENTT) has biased composition (low complexity). Residues 693–705 (SVSNTDQGTVASD) show a composition bias toward polar residues. Positions 706 to 761 (SITTPASEAASTAASTVSSEVSESVTVSSEPSETENSSEASTSESATPTTTAISES) are enriched in low complexity. The segment covering 771-788 (LTESESQASTSLVSETTS) has biased composition (polar residues).

It belongs to the glycosyl hydrolase 66 family.

It carries out the reaction Endohydrolysis of (1-&gt;6)-alpha-D-glucosidic linkages in dextran.. This chain is Dextranase (dex), found in Streptococcus salivarius.